The primary structure comprises 339 residues: DNA-directed RNA polymerase subunit alpha (339 aa).

The interval 1-235 (MVIQKNWQEL…DQLQVFVNFE (235 aa)) is alpha N-terminal domain (alpha-NTD). The interval 251–339 (FNPALLKKVD…DLAKRFEEHY (89 aa)) is alpha C-terminal domain (alpha-CTD).

Belongs to the RNA polymerase alpha chain family. Homodimer. The RNAP catalytic core consists of 2 alpha, 1 beta, 1 beta' and 1 omega subunit. When a sigma factor is associated with the core the holoenzyme is formed, which can initiate transcription.

The catalysed reaction is RNA(n) + a ribonucleoside 5'-triphosphate = RNA(n+1) + diphosphate. Its function is as follows. DNA-dependent RNA polymerase catalyzes the transcription of DNA into RNA using the four ribonucleoside triphosphates as substrates. This chain is DNA-directed RNA polymerase subunit alpha, found in Methylorubrum extorquens (strain CM4 / NCIMB 13688) (Methylobacterium extorquens).